The sequence spans 309 residues: Small ribosomal subunit biogenesis GTPase RsgA (309 aa).

The 162-residue stretch at 64–225 (ENELVRPPLA…VADTPGFSTY (162 aa)) folds into the CP-type G domain. GTP-binding positions include 113-116 (SKTD) and 168-176 (GQTGAGKST). Residues Cys249, Cys254, His256, and Cys262 each contribute to the Zn(2+) site.

Belongs to the TRAFAC class YlqF/YawG GTPase family. RsgA subfamily. As to quaternary structure, monomer. Associates with 30S ribosomal subunit, binds 16S rRNA. Requires Zn(2+) as cofactor.

The protein localises to the cytoplasm. Functionally, one of several proteins that assist in the late maturation steps of the functional core of the 30S ribosomal subunit. Helps release RbfA from mature subunits. May play a role in the assembly of ribosomal proteins into the subunit. Circularly permuted GTPase that catalyzes slow GTP hydrolysis, GTPase activity is stimulated by the 30S ribosomal subunit. The chain is Small ribosomal subunit biogenesis GTPase RsgA from Pediococcus pentosaceus (strain ATCC 25745 / CCUG 21536 / LMG 10740 / 183-1w).